Here is a 586-residue protein sequence, read N- to C-terminus: Alpha-1,2-mannosyltransferase MNN5 (586 aa).

An N-terminal signal peptide occupies residues 1–29 (MLIRLKKRKILQVIVSAVVLILFFCSVHN). N-linked (GlcNAc...) asparagine glycosylation is found at asparagine 113, asparagine 136, asparagine 259, and asparagine 264.

This sequence belongs to the MNN1/MNT family. Glycosylated.

Its subcellular location is the golgi apparatus. The protein localises to the cis-Golgi network. The protein operates within protein modification; protein glycosylation. Functionally, responsible for addition of first and second mannose residues to the outer chain of core N-linked polysaccharides and to O-linked mannotriose. Implicated in late Golgi modifications. The protein is Alpha-1,2-mannosyltransferase MNN5 (MNN5) of Saccharomyces cerevisiae (strain YJM789) (Baker's yeast).